We begin with the raw amino-acid sequence, 209 residues long: Cytidylyl-2-hydroxypropylphosphonate hydrolase (209 aa).

The a divalent metal cation site is built by Asn-111, Asp-127, Glu-129, and Asp-131. Catalysis depends on Lys-144, which acts as the Proton donor. Position 145 (Asp-145) interacts with a divalent metal cation.

This sequence belongs to the FomD family. Monomer in solution. Requires Mn(2+) as cofactor. The cofactor is Co(2+).

It catalyses the reaction cytidine 5'-({hydroxy[(S)-2-hydroxypropyl]phosphonoyl}phosphate) + H2O = (S)-2-hydroxypropylphosphonate + CMP + H(+). It participates in antibiotic biosynthesis; fosfomycin biosynthesis. Hydrolysis of (S)-HPP-CMP is inhibited by CDP. In terms of biological role, involved in fosfomycin biosynthesis. Catalyzes the hydrolysis of cytidylyl (S)-2-hydroxypropylphosphonate ((S)-HPP-CMP) to give (S)-2-hydroxypropylphosphonate ((S)-HPP) and CMP. Can also hydrolyze (R)-HPP-CMP and cytidylyl 2-hydroxyethylphosphonate (HEP-CMP), which is a biosynthetic intermediate before C-methylation, but the catalytic efficiency is much higher with (S)-HPP-CMP. The sequence is that of Cytidylyl-2-hydroxypropylphosphonate hydrolase from Streptomyces wedmorensis.